The following is a 202-amino-acid chain: Recoverin (202 aa).

The N-myristoyl glycine moiety is linked to residue G2. Residue C39 is modified to Cysteine sulfenic acid (-SOH). 4 EF-hand domains span residues 41-59, 61-96, 97-132, and 147-182; these read SGRITRQEFESIYSKFFPD, DPKAYAQHVFRSFDANSDGTLDFKEYVIALHMTTAG, KPTQKLEWAFSLYDVDGNGTISKNEVLEIVMAIFKM, and TPEKRAEKIWAFFGKKEDDKLTEEEFIEGTLANKEI. Positions 74, 76, 78, 80, 85, 110, 112, 114, 116, and 121 each coordinate Ca(2+). The segment at 189 to 192 is interaction with GRK1; sequence EPQK.

The protein belongs to the recoverin family. As to quaternary structure, homodimer; disulfide-linked. Homodimerization is caused by prolonged intense illumination. May form a complex composed of RHO, GRK1 and RCVRN in a Ca(2+)-dependent manner; RCVRN prevents the interaction between GRK1 and RHO. Interacts (via C-terminus) with GRK1 (via N-terminus); the interaction is Ca(2+)-dependent. In terms of processing, the N-terminal glycine is linked to one of four different types of acyl groups. The most abundant is myristoleate (14:1), but 14:0, 14:2, and 12:0 acyl residues are also present. The Ca(2+) induced exposure of the myristoyl group, known as the calcium-myristoyl switch, promotes RCVRN binding to the photoreceptor cell membranes only when intracellular Ca(2+) concentration is high. Oxidation on Cys-39 occurs in response to prolonged intense illumination and results in the formation of disulfide homodimers, and to a lesser extent disulfide-linked heterodimers. Expressed in rod photoreceptors in the retina (at protein level).

It localises to the photoreceptor inner segment. Its subcellular location is the cell projection. The protein localises to the cilium. It is found in the photoreceptor outer segment. The protein resides in the photoreceptor outer segment membrane. It localises to the perikaryon. Acts as a calcium sensor and regulates phototransduction of cone and rod photoreceptor cells. Modulates light sensitivity of cone photoreceptor in dark and dim conditions. In response to high Ca(2+) levels induced by low light levels, prolongs RHO/rhodopsin activation in rod photoreceptor cells by binding to and inhibiting GRK1-mediated phosphorylation of RHO/rhodopsin. Plays a role in scotopic vision/enhances vision in dim light by enhancing signal transfer between rod photoreceptors and rod bipolar cells. Improves rod photoreceptor sensitivity in dim light and mediates response of rod photoreceptors to facilitate detection of change and motion in bright light. The polypeptide is Recoverin (Rcvrn) (Mus musculus (Mouse)).